A 311-amino-acid polypeptide reads, in one-letter code: Methionyl-tRNA formyltransferase (311 aa).

112–115 contributes to the (6S)-5,6,7,8-tetrahydrofolate binding site; the sequence is SLLP.

It belongs to the Fmt family.

It carries out the reaction L-methionyl-tRNA(fMet) + (6R)-10-formyltetrahydrofolate = N-formyl-L-methionyl-tRNA(fMet) + (6S)-5,6,7,8-tetrahydrofolate + H(+). In terms of biological role, attaches a formyl group to the free amino group of methionyl-tRNA(fMet). The formyl group appears to play a dual role in the initiator identity of N-formylmethionyl-tRNA by promoting its recognition by IF2 and preventing the misappropriation of this tRNA by the elongation apparatus. This Sinorhizobium medicae (strain WSM419) (Ensifer medicae) protein is Methionyl-tRNA formyltransferase.